The following is a 93-amino-acid chain: Molybdopterin synthase sulfur carrier subunit (93 aa).

Residue glycine 93 is modified to 1-thioglycine; alternate. Glycine 93 is subject to Glycyl adenylate; alternate.

The protein belongs to the MoaD family. MOCS2A subfamily. In terms of assembly, heterotetramer; composed of 2 small (MOCS2A) and 2 large (MOCS2B) subunits. C-terminal thiocarboxylation occurs in 2 steps, it is first acyl-adenylated (-COAMP) via the hesA/moeB/thiF part of uba4, then thiocarboxylated (-COSH) via the rhodanese domain of uba4.

Its subcellular location is the cytoplasm. The protein operates within cofactor biosynthesis; molybdopterin biosynthesis. Functionally, acts as a sulfur carrier required for molybdopterin biosynthesis. Component of the molybdopterin synthase complex that catalyzes the conversion of precursor Z into molybdopterin by mediating the incorporation of 2 sulfur atoms into precursor Z to generate a dithiolene group. In the complex, serves as sulfur donor by being thiocarboxylated (-COSH) at its C-terminus by uba4. After interaction with MOCS2B, the sulfur is then transferred to precursor Z to form molybdopterin. The chain is Molybdopterin synthase sulfur carrier subunit from Pyrenophora tritici-repentis (strain Pt-1C-BFP) (Wheat tan spot fungus).